Consider the following 355-residue polypeptide: Isocitrate dehydrogenase [NAD] subunit gamma, mitochondrial (355 aa).

A transit peptide (mitochondrion) is located at residue isoleucine 1. Citrate is bound by residues threonine 82 and asparagine 95. Residues arginine 98, arginine 129, and aspartate 216 each coordinate substrate. Aspartate 216 serves as a coordination point for Mn(2+). ADP contacts are provided by asparagine 274, threonine 275, and asparagine 286.

This sequence belongs to the isocitrate and isopropylmalate dehydrogenases family. Heterooligomer of subunits alpha (IDH3A), beta (IDH3B), and gamma (IDH3G) in the apparent ratio of 2:1:1. The heterodimer containing one IDH3A and one IDH3B subunit and the heterodimer containing one IDH3A and one IDH3G subunit assemble into a heterotetramer (which contains two subunits of IDH3A, one of IDH3B and one of IDH3G) and further into the heterooctamer. Requires Mg(2+) as cofactor. The cofactor is Mn(2+).

The protein localises to the mitochondrion. The heterotetramer and the heterodimer composed of IDH3A and IDH3G subunits can be allosterically activated by citrate (CIT) or/and ADP, and the two activators can act independently or synergistically. The heterodimer composed of IDH3A and IDH3B subunits cannot be allosterically regulated and the allosteric regulation of the heterotetramer is through the IDH3G subunit and not the IDH3B subunit. The IDH3G subunit contains the allosteric site which consists of a CIT-binding site and an ADP-binding site, and the binding of CIT and ADP causes conformational changes at the allosteric site which are transmitted to the active site in the catalytic subunit (IDH3A) through a cascade of conformational changes at the heterodimer interface, leading to stabilization of the isocitrate-binding at the active site and thus activation of the enzyme. ATP can activate the heterotetramer and the heterodimer composed of IDH3A and IDH3G subunits at low concentrations but inhibits their activities at high concentrations, whereas ATP exhibits only inhibitory effect on the heterodimer composed of IDH3A and IDH3B subunits. Functionally, regulatory subunit which plays a role in the allosteric regulation of the enzyme catalyzing the decarboxylation of isocitrate (ICT) into alpha-ketoglutarate. The heterodimer composed of the alpha (IDH3A) and beta (IDH3B) subunits and the heterodimer composed of the alpha (IDH3A) and gamma (IDH3G) subunits, have considerable basal activity but the full activity of the heterotetramer (containing two subunits of IDH3A, one of IDH3B and one of IDH3G) requires the assembly and cooperative function of both heterodimers. In Macaca fascicularis (Crab-eating macaque), this protein is Isocitrate dehydrogenase [NAD] subunit gamma, mitochondrial (IDH3G).